Here is a 424-residue protein sequence, read N- to C-terminus: UPF0597 protein SO_1403 (424 aa).

It belongs to the UPF0597 family.

The polypeptide is UPF0597 protein SO_1403 (Shewanella oneidensis (strain ATCC 700550 / JCM 31522 / CIP 106686 / LMG 19005 / NCIMB 14063 / MR-1)).